Here is a 142-residue protein sequence, read N- to C-terminus: UPF0310 protein PYRAB08750 (142 aa).

The protein belongs to the UPF0310 family.

In Pyrococcus abyssi (strain GE5 / Orsay), this protein is UPF0310 protein PYRAB08750.